The chain runs to 92 residues: Small ribosomal subunit protein uS19 (92 aa).

It belongs to the universal ribosomal protein uS19 family.

Its function is as follows. Protein S19 forms a complex with S13 that binds strongly to the 16S ribosomal RNA. This Streptococcus agalactiae serotype Ia (strain ATCC 27591 / A909 / CDC SS700) protein is Small ribosomal subunit protein uS19.